A 54-amino-acid chain; its full sequence is Ovomucoid (54 aa).

One can recognise a Kazal-like domain in the interval 4-54 (VDCSEYPKPACTMEHRPLCGSDNQTYDNKCNFCNAVVESNGTLTLSHFGKC). 3 disulfide bridges follow: Cys-6-Cys-36, Cys-14-Cys-33, and Cys-22-Cys-54. The N-linked (GlcNAc...) asparagine glycan is linked to Asn-43.

The protein resides in the secreted. This chain is Ovomucoid, found in Guttera pucherani (Eastern crested guineafowl).